Consider the following 898-residue polypeptide: DNA gyrase subunit A (898 aa).

Disordered stretches follow at residues 1 to 22 and 36 to 56; these read MSDDKKDEEKLKKSDENFDDDS and EEEKAKEEDEDEEEIPQEKEG. The Topo IIA-type catalytic domain occupies 97–562; it reads LPDARDGLKP…VMSSINNEDL (466 aa). The active-site O-(5'-phospho-DNA)-tyrosine intermediate is Tyr-185. The GyrA-box motif lies at 589 to 595; that stretch reads QRRGGVG.

The protein belongs to the type II topoisomerase GyrA/ParC subunit family. Heterotetramer, composed of two GyrA and two GyrB chains. In the heterotetramer, GyrA contains the active site tyrosine that forms a transient covalent intermediate with DNA, while GyrB binds cofactors and catalyzes ATP hydrolysis.

It localises to the cytoplasm. The catalysed reaction is ATP-dependent breakage, passage and rejoining of double-stranded DNA.. Functionally, a type II topoisomerase that negatively supercoils closed circular double-stranded (ds) DNA in an ATP-dependent manner to modulate DNA topology and maintain chromosomes in an underwound state. Negative supercoiling favors strand separation, and DNA replication, transcription, recombination and repair, all of which involve strand separation. Also able to catalyze the interconversion of other topological isomers of dsDNA rings, including catenanes and knotted rings. Type II topoisomerases break and join 2 DNA strands simultaneously in an ATP-dependent manner. The polypeptide is DNA gyrase subunit A (Metamycoplasma arthritidis (strain 158L3-1) (Mycoplasma arthritidis)).